A 94-amino-acid chain; its full sequence is Neutrophil antibiotic peptide NP-2 (94 aa).

An N-terminal signal peptide occupies residues 1–19 (MRTLTLLTALLLLALHTQA). Residues 20 to 62 (KSPQGTAEEAPDQEQLVMEDQDISISFGGDKGTALQDADVKAG) constitute a propeptide that is removed on maturation. 3 cysteine pairs are disulfide-bonded: Cys-65–Cys-93, Cys-67–Cys-82, and Cys-72–Cys-92.

The protein belongs to the alpha-defensin family. Highest expression in bone marrow and to a much lesser extent in small intestine.

The protein localises to the secreted. Active in vitro against S.aureus, fungi, Gram-positive and Gram-negative bacteria and to a lesser extent against an enveloped virus. The polypeptide is Neutrophil antibiotic peptide NP-2 (Defa) (Rattus norvegicus (Rat)).